The following is a 532-amino-acid chain: BTB/POZ domain-containing protein 3 (532 aa).

Residues Lys23–Leu54 are disordered. The segment covering Ser43–Lys53 has biased composition (low complexity). The region spanning Ala130 to Ala200 is the BTB domain. The BACK domain occupies Phe245–Gln310.

In terms of tissue distribution, expressed in visual cortex. Expressed in visual cortex layer IV neurons.

It is found in the cytoplasm. It localises to the cytosol. The protein localises to the nucleus. In terms of biological role, acts as a key regulator of dendritic field orientation during development of sensory cortex. Also directs dendrites toward active axon terminals when ectopically expressed. The chain is BTB/POZ domain-containing protein 3 (BTBD3) from Mustela putorius furo (European domestic ferret).